A 628-amino-acid polypeptide reads, in one-letter code: DNA ligase (628 aa).

NAD(+)-binding positions include 36 to 40 (DVEYD), 85 to 86 (SL), and Glu-117. The active-site N6-AMP-lysine intermediate is the Lys-119. The NAD(+) site is built by Arg-140, Glu-174, Lys-309, and Lys-333. Zn(2+) contacts are provided by Cys-427, Cys-430, Cys-446, and Cys-452.

The protein belongs to the NAD-dependent DNA ligase family. LigA subfamily. Mg(2+) is required as a cofactor. It depends on Mn(2+) as a cofactor.

The enzyme catalyses NAD(+) + (deoxyribonucleotide)n-3'-hydroxyl + 5'-phospho-(deoxyribonucleotide)m = (deoxyribonucleotide)n+m + AMP + beta-nicotinamide D-nucleotide.. Functionally, DNA ligase that catalyzes the formation of phosphodiester linkages between 5'-phosphoryl and 3'-hydroxyl groups in double-stranded DNA using NAD as a coenzyme and as the energy source for the reaction. It is essential for DNA replication and repair of damaged DNA. This chain is DNA ligase, found in Tropheryma whipplei (strain TW08/27) (Whipple's bacillus).